The chain runs to 710 residues: Ephexin-1 (710 aa).

Composition is skewed to basic and acidic residues over residues Met-1 to Lys-11 and Glu-26 to Thr-41. A disordered region spans residues Met-1 to Trp-143. Residues Met-1–Lys-273 form a regulatory region; modulates activity toward RHOA, RAC1 and CDC42 region. 2 stretches are compositionally biased toward polar residues: residues Ala-89 to Leu-102 and Met-127 to Asn-136. Tyr-179 bears the Phosphotyrosine mark. A disordered region spans residues Arg-194 to Leu-236. Over residues Asp-213–Pro-227 the composition is skewed to acidic residues. In terms of domain architecture, DH spans Lys-273–Gly-457. In terms of domain architecture, PH spans Trp-489 to Arg-601. One can recognise an SH3 domain in the interval Leu-612–Asn-673. Residues Val-687–Lys-699 show a composition bias toward basic and acidic residues. The tract at residues Val-687–Gln-710 is disordered. Basic residues predominate over residues Asp-700–Gln-710.

As to quaternary structure, interacts with CDK5R1 and EPHA4; activated by EPHA4 through the CDK5 kinase. In terms of processing, src-dependent phosphorylation at Tyr-179 upon EPHA4 activation increases the guanine exchange factor activity toward RHOA. Phosphorylation by CDK5 upon EPHA4 activation by EFNA1 may regulate dendritic spine morphogenesis. Highly expressed in brain specifically in caudate nucleus and to a lower extent in amygdala and hippocampus. Also detected in lung.

Its subcellular location is the cytoplasm. The protein localises to the membrane. The protein resides in the cell projection. It is found in the growth cone. In terms of biological role, acts as a guanine nucleotide exchange factor (GEF) which differentially activates the GTPases RHOA, RAC1 and CDC42. Plays a role in axon guidance regulating ephrin-induced growth cone collapse and dendritic spine morphogenesis. Upon activation by ephrin through EPHA4, the GEF activity switches toward RHOA resulting in its activation. Activated RHOA promotes cone retraction at the expense of RAC1- and CDC42-stimulated growth cone extension. The polypeptide is Ephexin-1 (NGEF) (Homo sapiens (Human)).